A 100-amino-acid chain; its full sequence is Urease subunit gamma (100 aa).

It belongs to the urease gamma subunit family. Heterotrimer of UreA (gamma), UreB (beta) and UreC (alpha) subunits. Three heterotrimers associate to form the active enzyme.

The protein localises to the cytoplasm. The catalysed reaction is urea + 2 H2O + H(+) = hydrogencarbonate + 2 NH4(+). The protein operates within nitrogen metabolism; urea degradation; CO(2) and NH(3) from urea (urease route): step 1/1. The chain is Urease subunit gamma from Bordetella bronchiseptica (strain ATCC BAA-588 / NCTC 13252 / RB50) (Alcaligenes bronchisepticus).